Here is a 325-residue protein sequence, read N- to C-terminus: Probable tRNA pseudouridine synthase B (325 aa).

Catalysis depends on aspartate 71, which acts as the Nucleophile. The PUA domain occupies 238 to 313 (LPKIYVKDSA…VAASIERVIM (76 aa)).

This sequence belongs to the pseudouridine synthase TruB family. Type 2 subfamily.

It carries out the reaction uridine(55) in tRNA = pseudouridine(55) in tRNA. Functionally, could be responsible for synthesis of pseudouridine from uracil-55 in the psi GC loop of transfer RNAs. The chain is Probable tRNA pseudouridine synthase B from Korarchaeum cryptofilum (strain OPF8).